The following is a 239-amino-acid chain: Carboxy-S-adenosyl-L-methionine synthase (239 aa).

S-adenosyl-L-methionine is bound by residues Y35, 64 to 66 (GCS), 88 to 89 (DN), and R195.

Belongs to the class I-like SAM-binding methyltransferase superfamily. Cx-SAM synthase family. In terms of assembly, homodimer.

It catalyses the reaction prephenate + S-adenosyl-L-methionine = carboxy-S-adenosyl-L-methionine + 3-phenylpyruvate + H2O. Its function is as follows. Catalyzes the conversion of S-adenosyl-L-methionine (SAM) to carboxy-S-adenosyl-L-methionine (Cx-SAM). The protein is Carboxy-S-adenosyl-L-methionine synthase of Helicobacter pylori (strain Shi470).